A 234-amino-acid chain; its full sequence is Probable pectate lyase F (234 aa).

An N-terminal signal peptide occupies residues 1–17 (MWSSIAAFPVLVPVALA).

Belongs to the polysaccharide lyase 3 family. Requires Ca(2+) as cofactor.

The protein localises to the secreted. The catalysed reaction is Eliminative cleavage of (1-&gt;4)-alpha-D-galacturonan to give oligosaccharides with 4-deoxy-alpha-D-galact-4-enuronosyl groups at their non-reducing ends.. Pectinolytic enzyme consist of four classes of enzymes: pectin lyase, polygalacturonase, pectin methylesterase and rhamnogalacturonase. Among pectinolytic enzymes, pectin lyase is the most important in depolymerization of pectin, since it cleaves internal glycosidic bonds of highly methylated pectins. Favors pectate, the anion, over pectin, the methyl ester. The polypeptide is Probable pectate lyase F (plyF) (Aspergillus fumigatus (strain ATCC MYA-4609 / CBS 101355 / FGSC A1100 / Af293) (Neosartorya fumigata)).